The primary structure comprises 296 residues: Probable porphobilinogen deaminase (296 aa).

S-(dipyrrolylmethanemethyl)cysteine is present on Cys-241.

This sequence belongs to the HMBS family. It depends on dipyrromethane as a cofactor.

The catalysed reaction is 4 porphobilinogen + H2O = hydroxymethylbilane + 4 NH4(+). It participates in porphyrin-containing compound metabolism; protoporphyrin-IX biosynthesis; coproporphyrinogen-III from 5-aminolevulinate: step 2/4. Tetrapolymerization of the monopyrrole PBG into the hydroxymethylbilane pre-uroporphyrinogen in several discrete steps. This Pyrobaculum calidifontis (strain DSM 21063 / JCM 11548 / VA1) protein is Probable porphobilinogen deaminase.